The following is a 126-amino-acid chain: Small ribosomal subunit protein uS12 (126 aa).

A 3-methylthioaspartic acid modification is found at D89.

It belongs to the universal ribosomal protein uS12 family. Part of the 30S ribosomal subunit. Contacts proteins S8 and S17. May interact with IF1 in the 30S initiation complex.

Functionally, with S4 and S5 plays an important role in translational accuracy. Its function is as follows. Interacts with and stabilizes bases of the 16S rRNA that are involved in tRNA selection in the A site and with the mRNA backbone. Located at the interface of the 30S and 50S subunits, it traverses the body of the 30S subunit contacting proteins on the other side and probably holding the rRNA structure together. The combined cluster of proteins S8, S12 and S17 appears to hold together the shoulder and platform of the 30S subunit. This is Small ribosomal subunit protein uS12 from Polynucleobacter necessarius subsp. necessarius (strain STIR1).